The sequence spans 203 residues: MAKEIAKSLLDIEAVTLSPNDLYTWSSGIKSPIYCDNRVTLGYPLVRGAIRDGLINLIKEHFPEVEVISGTATAGIPHAAFIAEKLKLPMNYVRSSNKSHGKQNQIEGAKSEGKKVVVIEDLISTGGSSVTAVEALKLAGAEVLGVVAIFTYGLKKADDTFSNIQLPFYTLSDYSELIEVAENEGKISSEDIQTLVEWRDNLA.

Residues Arg-94, Lys-98, His-100, and 120-128 (EDLISTGGS) each bind 5-phospho-alpha-D-ribose 1-diphosphate. Ser-124 serves as a coordination point for orotate.

Belongs to the purine/pyrimidine phosphoribosyltransferase family. PyrE subfamily. As to quaternary structure, homodimer. Mg(2+) is required as a cofactor.

The enzyme catalyses orotidine 5'-phosphate + diphosphate = orotate + 5-phospho-alpha-D-ribose 1-diphosphate. It participates in pyrimidine metabolism; UMP biosynthesis via de novo pathway; UMP from orotate: step 1/2. Catalyzes the transfer of a ribosyl phosphate group from 5-phosphoribose 1-diphosphate to orotate, leading to the formation of orotidine monophosphate (OMP). This chain is Orotate phosphoribosyltransferase, found in Staphylococcus aureus (strain MSSA476).